The chain runs to 721 residues: Protein mu-NS (721 aa).

The interaction with sigma-NS stretch occupies residues 1–13 (MASFKGFSANTVP). The interval 1–38 (MASFKGFSANTVPVSKTRKDTSSLTATPGLRAPSMSSP) is RNA-binding. Positions 14 to 40 (VSKTRKDTSSLTATPGLRAPSMSSPVD) are interaction with mu-2. The interval 17–37 (TRKDTSSLTATPGLRAPSMSS) is disordered. The interval 471-721 (QSDTVDGIKL…IDFSVPADEL (251 aa)) is involved in the formation of factory-like inclusions. Coiled coils occupy residues 523–556 (LLSQ…ADVK) and 632–686 (KQAH…NQRQ).

The protein belongs to the orthoreovirus mu-NS protein family. In terms of assembly, interacts with mu-2. Interacts with sigma-NS; in viral factories. Interacts with the inner capsid proteins lambda-1 and sigma-2, and outer capsid protein lambda-2; in viral factories. The N-terminus is blocked.

The protein resides in the host cytoplasm. Functionally, non-structural protein implicated with protein sigma-NS in forming the matrix of viral factories, which are large inclusions in the host cytoplasm where replication intermediates are assembled and viral RNA replication takes place. Together with mu-2, recruits the other core proteins to these factories. In Mammalia (T2J), this protein is Protein mu-NS (M3).